A 410-amino-acid chain; its full sequence is LL-diaminopimelate aminotransferase (410 aa).

Substrate contacts are provided by Tyr-15 and Gly-42. Residues Tyr-72, Ser-108–Lys-109, Tyr-132, Asn-187, Tyr-218, and Ser-246–Ser-248 contribute to the pyridoxal 5'-phosphate site. Substrate is bound by residues Lys-109, Tyr-132, and Asn-187. Lys-249 is modified (N6-(pyridoxal phosphate)lysine). The pyridoxal 5'-phosphate site is built by Arg-257 and Asn-292. Residues Asn-292 and Arg-388 each contribute to the substrate site.

It belongs to the class-I pyridoxal-phosphate-dependent aminotransferase family. LL-diaminopimelate aminotransferase subfamily. In terms of assembly, homodimer. Pyridoxal 5'-phosphate serves as cofactor.

It catalyses the reaction (2S,6S)-2,6-diaminopimelate + 2-oxoglutarate = (S)-2,3,4,5-tetrahydrodipicolinate + L-glutamate + H2O + H(+). It functions in the pathway amino-acid biosynthesis; L-lysine biosynthesis via DAP pathway; LL-2,6-diaminopimelate from (S)-tetrahydrodipicolinate (aminotransferase route): step 1/1. Its function is as follows. Involved in the synthesis of meso-diaminopimelate (m-DAP or DL-DAP), required for both lysine and peptidoglycan biosynthesis. Catalyzes the direct conversion of tetrahydrodipicolinate to LL-diaminopimelate. The chain is LL-diaminopimelate aminotransferase from Geotalea uraniireducens (strain Rf4) (Geobacter uraniireducens).